A 420-amino-acid chain; its full sequence is Putative T-box protein 33 (420 aa).

Residues 93–291 (LWKELHYLSN…ANPTSRGDAK (199 aa)) constitute a DNA-binding region (T-box). The span at 395–412 (SPPLQPTATSPEASQNQI) shows a compositional bias: polar residues. The tract at residues 395 to 420 (SPPLQPTATSPEASQNQIKLEMNQYM) is disordered.

It localises to the nucleus. The sequence is that of Putative T-box protein 33 (tbx-33) from Caenorhabditis elegans.